The chain runs to 209 residues: Small ribosomal subunit protein uS3 (209 aa).

In terms of domain architecture, KH type-2 spans 38 to 107 (IRKFIKNRYY…RVVINIEEIK (70 aa)).

The protein belongs to the universal ribosomal protein uS3 family. Part of the 30S ribosomal subunit. Forms a tight complex with proteins S10 and S14.

Binds the lower part of the 30S subunit head. Binds mRNA in the 70S ribosome, positioning it for translation. This is Small ribosomal subunit protein uS3 from Thermotoga petrophila (strain ATCC BAA-488 / DSM 13995 / JCM 10881 / RKU-1).